The primary structure comprises 157 residues: Succinate dehydrogenase assembly factor 2-B, mitochondrial (157 aa).

The N-terminal 24 residues, 1 to 24 (MLRQFLFSTASRRLVRPMIAPHRS), are a transit peptide targeting the mitochondrion.

This sequence belongs to the SDHAF2 family. In terms of assembly, interacts with the flavoprotein subunit within the SDH catalytic dimer.

Its subcellular location is the mitochondrion matrix. Functionally, plays an essential role in the assembly of succinate dehydrogenase (SDH), an enzyme complex (also referred to as respiratory complex II) that is a component of both the tricarboxylic acid (TCA) cycle and the mitochondrial electron transport chain, and which couples the oxidation of succinate to fumarate with the reduction of ubiquinone (coenzyme Q) to ubiquinol. Required for flavinylation (covalent attachment of FAD) of the flavoprotein subunit of the SDH catalytic dimer. The polypeptide is Succinate dehydrogenase assembly factor 2-B, mitochondrial (Drosophila persimilis (Fruit fly)).